The following is a 436-amino-acid chain: MRIVVLGAGVVGVTSAYELARAGHEVTVVDRQPAAALETSFANAGEISPGYASPWAAPGIPAKALRWMFMKHAPLVIRPRLDAAQVRFLLAILRNCTPAAYAQNKGRMVRLAEYSRDCLTDLRATTGLAFDERQQGTLQLFRSQKQLDAAARDIEVLRAGGVPFELLDADGCLAAEPGLRAARDRIAGGLRLTGDETGDCFKFTQGLAGLAEEGGVRFRYGTGVERLRVEGGRVTGVETTKGTFLADAVVVALGSYSPALVAPLGLRLPVYPVKGYSITVPIVDAERAPVSTVMDETYKIAITRLGTRIRVGGMAEVAGFSATLPPARRETLAMSVNDLFGGAGDLSRASFWTGLRPMTPDGTPVVGRTPVAGLWLNTGHGTLGWTMAAGSARVLSDLIDGRAPEIESADLGIERYVAPDRRARPAVRLNPARQAG.

Ile-3–Tyr-17 contacts FAD.

It belongs to the DadA oxidoreductase family. The cofactor is FAD.

It carries out the reaction a D-alpha-amino acid + A + H2O = a 2-oxocarboxylate + AH2 + NH4(+). The protein operates within amino-acid degradation; D-alanine degradation; NH(3) and pyruvate from D-alanine: step 1/1. Functionally, oxidative deamination of D-amino acids. The sequence is that of D-amino acid dehydrogenase from Cereibacter sphaeroides (strain ATCC 17029 / ATH 2.4.9) (Rhodobacter sphaeroides).